Consider the following 238-residue polypeptide: tRNA (guanine-N(1)-)-methyltransferase (238 aa).

S-adenosyl-L-methionine-binding positions include G112 and 131–136; that span reads LGDFIL.

The protein belongs to the RNA methyltransferase TrmD family. Homodimer.

Its subcellular location is the cytoplasm. The catalysed reaction is guanosine(37) in tRNA + S-adenosyl-L-methionine = N(1)-methylguanosine(37) in tRNA + S-adenosyl-L-homocysteine + H(+). Its function is as follows. Specifically methylates guanosine-37 in various tRNAs. The chain is tRNA (guanine-N(1)-)-methyltransferase from Nostoc punctiforme (strain ATCC 29133 / PCC 73102).